Reading from the N-terminus, the 146-residue chain is D-aminoacyl-tRNA deacylase (146 aa).

A Gly-cisPro motif, important for rejection of L-amino acids motif is present at residues 137–138 (GP).

It belongs to the DTD family. As to quaternary structure, homodimer.

The protein resides in the cytoplasm. The enzyme catalyses glycyl-tRNA(Ala) + H2O = tRNA(Ala) + glycine + H(+). It carries out the reaction a D-aminoacyl-tRNA + H2O = a tRNA + a D-alpha-amino acid + H(+). Its function is as follows. An aminoacyl-tRNA editing enzyme that deacylates mischarged D-aminoacyl-tRNAs. Also deacylates mischarged glycyl-tRNA(Ala), protecting cells against glycine mischarging by AlaRS. Acts via tRNA-based rather than protein-based catalysis; rejects L-amino acids rather than detecting D-amino acids in the active site. By recycling D-aminoacyl-tRNA to D-amino acids and free tRNA molecules, this enzyme counteracts the toxicity associated with the formation of D-aminoacyl-tRNA entities in vivo and helps enforce protein L-homochirality. The sequence is that of D-aminoacyl-tRNA deacylase from Halalkalibacterium halodurans (strain ATCC BAA-125 / DSM 18197 / FERM 7344 / JCM 9153 / C-125) (Bacillus halodurans).